The primary structure comprises 223 residues: MITKLPQVLSPIQVASIIQLIEHGSFNSGKDTAGWHAKAVKNNLQWQGETELNEQIQTGIQGALTQHPQFTGAAYAKSMMPFIISESTLGGGYGDHIDDALMVNETVLRTDISCTLFLTPPQDYEGGELVMNLSGMEMAFKLNAGDAIIYPSTTLHRVNPVTSGSRKVALTWIESHIPQASQREILFDLDCARKDIMEHHGKTDAFDRITKTHANLLRQWAMT.

Residues 77 to 175 (KSMMPFIISE…RKVALTWIES (99 aa)) enclose the Fe2OG dioxygenase domain. Fe cation is bound by residues histidine 96, aspartate 98, and histidine 156. Arginine 166 contributes to the 2-oxoglutarate binding site.

Fe(2+) serves as cofactor. Requires L-ascorbate as cofactor.

The polypeptide is PKHD-type hydroxylase CPS_3426 (Colwellia psychrerythraea (strain 34H / ATCC BAA-681) (Vibrio psychroerythus)).